A 282-amino-acid polypeptide reads, in one-letter code: Sulfur carrier protein FdhD (282 aa).

Residue C126 is the Cysteine persulfide intermediate of the active site. Residue 265-270 coordinates Mo-bis(molybdopterin guanine dinucleotide); it reads FVRNNR.

It belongs to the FdhD family.

It is found in the cytoplasm. Functionally, required for formate dehydrogenase (FDH) activity. Acts as a sulfur carrier protein that transfers sulfur from IscS to the molybdenum cofactor prior to its insertion into FDH. The protein is Sulfur carrier protein FdhD of Thermoplasma acidophilum (strain ATCC 25905 / DSM 1728 / JCM 9062 / NBRC 15155 / AMRC-C165).